The primary structure comprises 57 residues: Preprotein translocase subunit SecG (57 aa).

The Cytoplasmic portion of the chain corresponds to 1–33 (MPSSKKKKENVPVMSMAGLIRYYEEEHEKYKVD). Residues 34-55 (PIYVIIASIVLVAVVVAVTKII) form a helical membrane-spanning segment. At 56–57 (PP) the chain is on the extracellular side.

Belongs to the SEC61-beta family. Component of the protein translocase complex. Heterotrimer consisting of alpha (SecY), beta (SecG) and gamma (SecE) subunits. Can form oligomers of the heterotrimer.

It is found in the cell membrane. Involved in protein export. The function of the beta subunit is unknown, but it may be involved in stabilization of the trimeric complex. In Metallosphaera sedula (strain ATCC 51363 / DSM 5348 / JCM 9185 / NBRC 15509 / TH2), this protein is Preprotein translocase subunit SecG.